We begin with the raw amino-acid sequence, 487 residues long: Protein DETOXIFICATION 10 (487 aa).

12 helical membrane passes run 35–55, 73–93, 122–142, 155–175, 184–204, 211–231, 264–284, 293–313, 333–353, 377–397, 412–432, and 435–455; these read LICFAAPMAAVVIIQFMIQII, FAVSFCNVTGFSFIIGLSCAL, LVCLPLSLLWFNMGKLIVILG, AAWLIPGLFAYAVLQPLIRYF, LLVTSSVVFCIHVPLCWLLVY, IGGALALSLSYWLYAIFLGSF, AAMLCLEWWSYELIILLSGLL, VLSICFETLSITYSIPLAIAA, IVVYAAMSLAVMDALMVSMSL, MAPLVSISIILDSLQGVLSGV, FGAFYLWGIPIAASLAFWVHL, and VGLWIGILAGAVLQTLLLALV.

The protein belongs to the multi antimicrobial extrusion (MATE) (TC 2.A.66.1) family.

The protein localises to the membrane. The sequence is that of Protein DETOXIFICATION 10 from Arabidopsis thaliana (Mouse-ear cress).